We begin with the raw amino-acid sequence, 1024 residues long: Integrator complex subunit 7 homolog (1024 aa).

Polar residues-rich tracts occupy residues 1-11 (MSKYKNSSLLN) and 19-36 (PSLS…QLPP). Disordered stretches follow at residues 1–109 (MSKY…PTNS), 472–502 (DNNN…NNNN), and 842–863 (NNNN…NNNN). Composition is skewed to low complexity over residues 44 to 77 (STNN…NNTV), 85 to 96 (TAGSSTSSASSV), and 473 to 502 (NNNN…NNNN).

It belongs to the Integrator subunit 7 family. As to quaternary structure, component of the Integrator complex. The core complex associates with protein phosphatase 2A subunits, to form the Integrator-PP2A (INTAC) complex.

Its subcellular location is the nucleus. The protein localises to the chromosome. It is found in the cytoplasm. Component of the integrator complex, a multiprotein complex that terminates RNA polymerase II (Pol II) transcription in the promoter-proximal region of genes. The integrator complex provides a quality checkpoint during transcription elongation by driving premature transcription termination of transcripts that are unfavorably configured for transcriptional elongation: the complex terminates transcription by (1) catalyzing dephosphorylation of the C-terminal domain (CTD) of Pol II subunit polr2a, (2) degrading the exiting nascent RNA transcript via endonuclease activity and (3) promoting the release of Pol II from bound DNA. The integrator complex is also involved in terminating the synthesis of non-coding Pol II transcripts, such as enhancer RNAs (eRNAs), small nuclear RNAs (snRNAs), telomerase RNAs and long non-coding RNAs (lncRNAs). The protein is Integrator complex subunit 7 homolog (ints7) of Dictyostelium discoideum (Social amoeba).